The chain runs to 355 residues: Protein HGH1 homolog (355 aa).

The tract at residues 324–355 (DEEGDPTPEEIEQMNKKQKLEDEDAQFETDEI) is disordered. 2 stretches are compositionally biased toward acidic residues: residues 325–335 (EEGDPTPEEIE) and 344–355 (EDEDAQFETDEI).

This sequence belongs to the HGH1 family.

The chain is Protein HGH1 homolog from Dictyostelium discoideum (Social amoeba).